We begin with the raw amino-acid sequence, 216 residues long: Neural cell adhesion molecule L1.2 (216 aa).

The Fibronectin type-III domain maps to 1-64 (EFFIHYLRKD…QTAGARVMEV (64 aa)). Residues 1–73 (EFFIHYLRKD…VKSGFVTESW (73 aa)) are Extracellular-facing. N22 and N46 each carry an N-linked (GlcNAc...) asparagine glycan. Residues 74 to 94 (FIGLISALVLLLLVLLILCFI) form a helical membrane-spanning segment. The Cytoplasmic portion of the chain corresponds to 95–216 (KRSKGGKYSV…GLPNSAALLD (122 aa)). Disordered regions lie at residues 127–149 (YRSLESDNEEKRTASQPSLCEDS) and 173–216 (DESL…ALLD). A compositionally biased stretch (basic and acidic residues) spans 128–139 (RSLESDNEEKRT).

This sequence belongs to the immunoglobulin superfamily. L1/neurofascin/NgCAM family. In terms of tissue distribution, expressed in many postmitotic neurons in 16-36 hours embryos. Little or no expression in the olfactory placode, the anterior lateral line/acoustic ganglia complex, the posterior lateral line ganglion, late-developing hindbrain neurons and some Rohon-Beard cells in the spinal cord.

The protein resides in the cell membrane. The protein localises to the cell projection. Its subcellular location is the growth cone. Functionally, cell adhesion molecule with an important role in the development of the nervous system. Involved in neuron-neuron adhesion, neurite fasciculation, outgrowth of neurites, etc. Binds to axonin on neurons. This Danio rerio (Zebrafish) protein is Neural cell adhesion molecule L1.2 (nadl1.2).